We begin with the raw amino-acid sequence, 454 residues long: MNNAGLNSEKVAALIQKLNSDPQFVLAQNVGTTHDLLDICLKRATVQGAQHVFQHVVPQEGKPVTNQKSSGRCWIFSCLNVMRLPFMKKFNIEEFEFSQSYLFFWDKVERCYFFLNAFVDTAQKKEPEDGRLVQYLLMNPTNDGGQWDMLVNIVEKYGVVPKKCFPESHTTEATRRMNDILNHKMREFCIRLRNLVHSGATKGEISSTQDAMMEEIFRVVCICLGNPPETFTWEYRDKDKNYHKVGPITPLQFYKEHVKPLFNMEDKICFVNDPRPQHKYNKLYTVDYLSNMVGGRKTLYNNQPIDFLKKMVAASIRDGEAVWFGCDVGKHFNGKLGLSDMNVYDHELVFGVSLKNMNKAERLAFGESLMTHAMTFTAVSEKDDQEGAFVKWRVENSWGEDHGHKGYLCMTDEWFSEYVYEVVVDKKHVPEEVLAVLEQEPIVLPAWDPMGALA.

The residue at position 1 (Met1) is an N-acetylmethionine. Active-site residues include Cys73 and His372. N6-acetyllysine is present on Lys391. Asn396 is an active-site residue.

Belongs to the peptidase C1 family. As to quaternary structure, homohexamer. Interacts with NUDT12 (via ANK repeats). Expressed at relatively higher levels in the stomach, esophagus, spleen, thymus and testis, and at lower levels in the skin, lung and skeletal muscle.

Its subcellular location is the cytoplasm. The protein resides in the cytoplasmic granule. The catalysed reaction is Inactivates bleomycin B2 (a cytotoxic glycometallopeptide) by hydrolysis of a carboxyamide bond of beta-aminoalanine, but also shows general aminopeptidase activity. The specificity varies somewhat with source, but amino acid arylamides of Met, Leu and Ala are preferred.. Its function is as follows. The normal physiological role of BLM hydrolase is unknown, but it catalyzes the inactivation of the antitumor drug BLM (a glycopeptide) by hydrolyzing the carboxamide bond of its B-aminoalaninamide moiety thus protecting normal and malignant cells from BLM toxicity. Binds single-stranded DNA with higher affinity than double-stranded DNA. May play an important role in the metabolism of antibiotics. The protein is Bleomycin hydrolase (Blmh) of Rattus norvegicus (Rat).